A 162-amino-acid chain; its full sequence is UPF0114 protein PA4574 (162 aa).

The next 3 membrane-spanning stretches (helical) occupy residues 10–32 (YASRWLLAPIYMGLSLALLALTI), 53–75 (LILVLLSLIDMALVGGLLVMVMI), and 136–156 (LMWYVIIHMTFVLSAFAMGYL).

Belongs to the UPF0114 family.

Its subcellular location is the cell membrane. This Pseudomonas aeruginosa (strain ATCC 15692 / DSM 22644 / CIP 104116 / JCM 14847 / LMG 12228 / 1C / PRS 101 / PAO1) protein is UPF0114 protein PA4574.